The chain runs to 464 residues: Cysteine--tRNA ligase (464 aa).

A Zn(2+)-binding site is contributed by cysteine 29. The 'HIGH' region motif lies at 31 to 41 (PTVYDFAHIGN). Positions 224, 249, and 253 each coordinate Zn(2+). The 'KMSKS' region motif lies at 282–286 (KMSKS). Lysine 285 provides a ligand contact to ATP.

Belongs to the class-I aminoacyl-tRNA synthetase family. Monomer. The cofactor is Zn(2+).

The protein resides in the cytoplasm. The catalysed reaction is tRNA(Cys) + L-cysteine + ATP = L-cysteinyl-tRNA(Cys) + AMP + diphosphate. The protein is Cysteine--tRNA ligase of Afipia carboxidovorans (strain ATCC 49405 / DSM 1227 / KCTC 32145 / OM5) (Oligotropha carboxidovorans).